A 299-amino-acid polypeptide reads, in one-letter code: Streptogrisin-B (299 aa).

Positions 1 to 38 are cleaved as a signal peptide; sequence MRIKRTSNRSNAARRVRTTAVLAGLAAVAALAVPTANA. The propeptide occupies 39–114; that stretch reads ETPRTFSANQ…ERTPGKFTKL (76 aa). Cysteines 128 and 148 form a disulfide. Residues histidine 147, aspartate 177, and serine 255 each act as charge relay system in the active site. Cysteine 249 and cysteine 276 are oxidised to a cystine.

This sequence belongs to the peptidase S1 family. As to quaternary structure, monomer.

The enzyme catalyses Hydrolysis of proteins with trypsin-like specificity.. Its function is as follows. Has a primary specificity for large aliphatic or aromatic amino acids. The polypeptide is Streptogrisin-B (sprB) (Streptomyces griseus).